A 120-amino-acid polypeptide reads, in one-letter code: Chaperonin GroEL (120 aa).

23–27 (DGTTT) is an ATP binding site.

It belongs to the chaperonin (HSP60) family. As to quaternary structure, forms a cylinder of 14 subunits composed of two heptameric rings stacked back-to-back. Interacts with the co-chaperonin GroES.

Its subcellular location is the cytoplasm. The enzyme catalyses ATP + H2O + a folded polypeptide = ADP + phosphate + an unfolded polypeptide.. Its function is as follows. Together with its co-chaperonin GroES, plays an essential role in assisting protein folding. The GroEL-GroES system forms a nano-cage that allows encapsulation of the non-native substrate proteins and provides a physical environment optimized to promote and accelerate protein folding. This Mycobacterium asiaticum protein is Chaperonin GroEL.